Consider the following 190-residue polypeptide: 2-phospho-L-lactate guanylyltransferase (190 aa).

This sequence belongs to the CofC family. Homodimer.

It catalyses the reaction (2S)-2-phospholactate + GTP + H(+) = (2S)-lactyl-2-diphospho-5'-guanosine + diphosphate. It functions in the pathway cofactor biosynthesis; coenzyme F420 biosynthesis. In terms of biological role, guanylyltransferase that catalyzes the activation of (2S)-2-phospholactate (2-PL) as (2S)-lactyl-2-diphospho-5'-guanosine, via the condensation of 2-PL with GTP. It is involved in the biosynthesis of coenzyme F420, a hydride carrier cofactor. In Methanopyrus kandleri (strain AV19 / DSM 6324 / JCM 9639 / NBRC 100938), this protein is 2-phospho-L-lactate guanylyltransferase.